The sequence spans 508 residues: NADH-quinone oxidoreductase subunit N 1 (508 aa).

The next 13 helical transmembrane spans lie at 2-22 (ILGP…GALL), 47-67 (ALGT…VGFV), 87-107 (FTLF…LLAG), 126-146 (FSTV…LFLG), 175-195 (FLLG…IYGA), 220-240 (ALLL…VSAV), 260-280 (FMAV…LLGA), 291-311 (AGWP…ANLI), 321-341 (MLAY…AATV), 351-371 (VMFY…TLIL), 396-416 (ALAF…AGFF), 431-453 (YTLS…RVLV), and 479-499 (LVVS…SLGI).

The protein belongs to the complex I subunit 2 family. As to quaternary structure, NDH-1 is composed of 14 different subunits. Subunits NuoA, H, J, K, L, M, N constitute the membrane sector of the complex.

Its subcellular location is the cell inner membrane. It catalyses the reaction a quinone + NADH + 5 H(+)(in) = a quinol + NAD(+) + 4 H(+)(out). In terms of biological role, NDH-1 shuttles electrons from NADH, via FMN and iron-sulfur (Fe-S) centers, to quinones in the respiratory chain. The immediate electron acceptor for the enzyme in this species is believed to be ubiquinone. Couples the redox reaction to proton translocation (for every two electrons transferred, four hydrogen ions are translocated across the cytoplasmic membrane), and thus conserves the redox energy in a proton gradient. The chain is NADH-quinone oxidoreductase subunit N 1 from Sorangium cellulosum (strain So ce56) (Polyangium cellulosum (strain So ce56)).